The sequence spans 122 residues: Large ribosomal subunit protein uL14c (122 aa).

The protein belongs to the universal ribosomal protein uL14 family. In terms of assembly, part of the 50S ribosomal subunit.

It is found in the plastid. It localises to the chloroplast. Its function is as follows. Binds to 23S rRNA. The sequence is that of Large ribosomal subunit protein uL14c from Platanus occidentalis (Sycamore).